The sequence spans 166 residues: Large ribosomal subunit protein uL10 (166 aa).

The protein belongs to the universal ribosomal protein uL10 family. In terms of assembly, part of the ribosomal stalk of the 50S ribosomal subunit. The N-terminus interacts with L11 and the large rRNA to form the base of the stalk. The C-terminus forms an elongated spine to which L12 dimers bind in a sequential fashion forming a multimeric L10(L12)X complex.

In terms of biological role, forms part of the ribosomal stalk, playing a central role in the interaction of the ribosome with GTP-bound translation factors. The chain is Large ribosomal subunit protein uL10 from Pseudomonas entomophila (strain L48).